Here is an 80-residue protein sequence, read N- to C-terminus: Serine rich endogenous peptide 18 (80 aa).

The signal sequence occupies residues 1 to 25 (MYNVVVCLLTLSFLLLTGLSNTAEA). Residues 45-59 (KAEVGGSCSPHAHGR) carry the SCOOP motif motif. The tract at residues 50–80 (GSCSPHAHGRGPPNRPGSSNIPGSPKRCTKP) is disordered. The short motif at 51–53 (SCS) is the SxS motif essential for MIK2 binding element.

It belongs to the serine rich endogenous peptide (SCOOP) phytocytokine family. In terms of assembly, interacts with MIK2 (via extracellular leucine-rich repeat domain); this interaction triggers the formation of complex between MIK2 and the BAK1/SERK3 and SERK4 coreceptors, and subsequent BAK1 activation by phosphorylation.

It is found in the cell membrane. The protein localises to the secreted. The protein resides in the extracellular space. It localises to the apoplast. Brassicaceae-specific phytocytokine (plant endogenous peptide released into the apoplast) perceived by MIK2 in a BAK1/SERK3 and SERK4 coreceptors-dependent manner, that modulates various physiological and antimicrobial processes including growth prevention and reactive oxygen species (ROS) response regulation. The sequence is that of Serine rich endogenous peptide 18 from Arabidopsis thaliana (Mouse-ear cress).